The following is a 305-amino-acid chain: L-lactate dehydrogenase (305 aa).

NAD(+) is bound by residues V11, D32, K37, and 76–77 (GV). Substrate contacts are provided by residues Q79, R85, and 117-120 (NPVD). NAD(+)-binding positions include 115–117 (ATN) and S140. 145–148 (DTAR) contributes to the substrate binding site. The beta-D-fructose 1,6-bisphosphate site is built by R150 and H165. Catalysis depends on H172, which acts as the Proton acceptor. Y218 carries the post-translational modification Phosphotyrosine. T227 lines the substrate pocket.

The protein belongs to the LDH/MDH superfamily. LDH family. As to quaternary structure, homotetramer.

The protein localises to the cytoplasm. It carries out the reaction (S)-lactate + NAD(+) = pyruvate + NADH + H(+). It participates in fermentation; pyruvate fermentation to lactate; (S)-lactate from pyruvate: step 1/1. Its activity is regulated as follows. Allosterically activated by fructose 1,6-bisphosphate (FBP). Functionally, catalyzes the conversion of lactate to pyruvate. The polypeptide is L-lactate dehydrogenase (Chloroherpeton thalassium (strain ATCC 35110 / GB-78)).